The following is a 562-amino-acid chain: MVKSKIYIDKIYWERVQLFVEGHSENLDLEDSNFVLRNLTETRTMKANDVKIDGNQFVCRFNVAILDNGYYLPEDKYLLVNEQELDYIAQLNPDVINDAYQNLKPEQEEEYNELETQNGKINFLLQTYLKEFRKGGISKKTVYTVTPEISSDVNEFVLDVVVTTPEVKSIYIVRKYKELRKYFRKQSFNTRQFIFKAIFNTTKFFHLKKGNTVLFTSDSRPTMSGNFEYIYNEMLRQNLDKKYDIHTVFKANITDRRGIIDKFRLPYLLGKADYIFVDDFHPLIYTVRFRRSQEVIQVWHAVGAFKTVGFSRTGKKGGPFIDSLNHRSYTKAYVSSETDIPFYAEAFGIKEKNVVPTGVPRTDVLFDEAYATQIKQEMEDELPIIKGKKVILFAPTFRGSGHGTAHYPFFKIDFERLARYCEKNNAVVLFKMHPFVKNRLNIADKHKQYFVDVSDFREVNDILFITDLLISDYSSLIYEYAVFKKPMIFYAFDLEDYITTRDFYEPYESFVPGKIVQSFDALMDALDNEDYEGEKVIPFLDKHFKYQDGRSSERLVRNLFGS.

This sequence belongs to the CDP-glycerol glycerophosphotransferase family.

It localises to the cell membrane. The catalysed reaction is 4-O-[di(2R)-glycerylphospho]-N-acetyl-beta-D-mannosaminyl-(1-&gt;4)-N-acetyl-alpha-D-glucosaminyl di-trans,octa-cis-undecaprenyl diphosphate + n CDP-L-ribitol = 4-O-[(D-ribitylphospho)(n)-di{(2R)-glycerylphospho}]-N-acetyl-beta-D-mannosaminyl-(1-&gt;4)-N-acetyl-alpha-D-glucosaminyl di-trans,octa-cis-undecaprenyl diphosphate + n CMP + n H(+). Its pathway is cell wall biogenesis; poly(ribitol phosphate) teichoic acid biosynthesis. Functionally, responsible for the polymerization of the main chain of the major teichoic acid by sequential transfer of ribitol phosphate units from CDP-ribitol to the second glycerol phosphate attached to the disaccharide linkage unit. Synthesizes polymers of more than 40 ribitol phosphate units in length. The chain is Teichoic acid ribitol-phosphate polymerase TarL (tarL) from Staphylococcus aureus (strain NCTC 8325 / PS 47).